Reading from the N-terminus, the 1226-residue chain is DNA-directed RNA polymerase subunit beta (1226 aa).

This sequence belongs to the RNA polymerase beta chain family. As to quaternary structure, the RNAP catalytic core consists of 2 alpha, 1 beta, 1 beta' and 1 omega subunit. When a sigma factor is associated with the core the holoenzyme is formed, which can initiate transcription.

The catalysed reaction is RNA(n) + a ribonucleoside 5'-triphosphate = RNA(n+1) + diphosphate. Functionally, DNA-dependent RNA polymerase catalyzes the transcription of DNA into RNA using the four ribonucleoside triphosphates as substrates. This Leptospira interrogans serogroup Icterohaemorrhagiae serovar copenhageni (strain Fiocruz L1-130) protein is DNA-directed RNA polymerase subunit beta.